We begin with the raw amino-acid sequence, 106 residues long: Terpredoxin (106 aa).

One can recognise a 2Fe-2S ferredoxin-type domain in the interval 2–106 (PRVVFIDEQS…GLIVRVPLPA (105 aa)). [2Fe-2S] cluster is bound by residues C40, C46, C49, and C87.

This sequence belongs to the adrenodoxin/putidaredoxin family. [2Fe-2S] cluster serves as cofactor.

Its function is as follows. The oxidation of alpha-terpineol by cytochrome p450-TERP requires the participation of a flavoprotein, terpredoxin reductase, and an iron-sulfur protein, terpredoxin, to mediate the transfer of electrons from NADH to P450 for oxygen activation. This Pseudomonas sp protein is Terpredoxin (terPB).